Here is a 361-residue protein sequence, read N- to C-terminus: Phosphoserine aminotransferase (361 aa).

R42 contributes to the L-glutamate binding site. Residues 76-77 (AR), W102, T153, D173, and Q196 contribute to the pyridoxal 5'-phosphate site. The residue at position 197 (K197) is an N6-(pyridoxal phosphate)lysine. Residue 238-239 (NT) coordinates pyridoxal 5'-phosphate.

Belongs to the class-V pyridoxal-phosphate-dependent aminotransferase family. SerC subfamily. Homodimer. Pyridoxal 5'-phosphate serves as cofactor.

The protein localises to the cytoplasm. The catalysed reaction is O-phospho-L-serine + 2-oxoglutarate = 3-phosphooxypyruvate + L-glutamate. The enzyme catalyses 4-(phosphooxy)-L-threonine + 2-oxoglutarate = (R)-3-hydroxy-2-oxo-4-phosphooxybutanoate + L-glutamate. It participates in amino-acid biosynthesis; L-serine biosynthesis; L-serine from 3-phospho-D-glycerate: step 2/3. The protein operates within cofactor biosynthesis; pyridoxine 5'-phosphate biosynthesis; pyridoxine 5'-phosphate from D-erythrose 4-phosphate: step 3/5. Catalyzes the reversible conversion of 3-phosphohydroxypyruvate to phosphoserine and of 3-hydroxy-2-oxo-4-phosphonooxybutanoate to phosphohydroxythreonine. This is Phosphoserine aminotransferase from Yersinia pestis (strain Pestoides F).